The following is a 261-amino-acid chain: MAPQQGRPALPARCEPPAAPPVPPRRERGGRGARGPGVSGGRGRAGGAEGRGVKCVLVGDGAVGKTSLVVSYTTNGYPTEYIPTAFDNFSAVVSVDGRPVRLQLCDTAGQDEFDKLRPLCYTNTDIFLLCFSVVSPTSFQNVGEKWVPEIRRHCPKAPIILVGTQSDLREDVKVLIELDKCKEKPVPEEAAKLCAEEVKAVSYIECSALTQKNLKEVFDAAIVAGIQHSDSQLQPKKSKSRTPDKVRDLSKSWWRKYCCLA.

Residues 1–48 (MAPQQGRPALPARCEPPAAPPVPPRRERGGRGARGPGVSGGRGRAGGA) form a disordered region. Low complexity predominate over residues 7–16 (RPALPARCEP). The segment covering 32 to 48 (GARGPGVSGGRGRAGGA) has biased composition (gly residues). Residues 59–66 (GDGAVGKT), 106–110 (DTAGQ), and 164–167 (TQSD) contribute to the GTP site. Residues lysine 180 and lysine 251 each participate in a glycyl lysine isopeptide (Lys-Gly) (interchain with G-Cter in ubiquitin) cross-link. Cysteine 259 carries S-palmitoyl cysteine lipidation.

It belongs to the small GTPase superfamily. Rho family. Interacts with PAK1. Interacts with PAK3. Interacts with ARHGAP30 in a GTP-independent manner. In its GTP-loaded conformation, interacts with ARHGAP31. Interacts with PTK2B/PYK2. Interacts with PAK4; interaction protects RHOU from ubiquitination and subsequent degradation. Mg(2+) is required as a cofactor. In terms of processing, tyrosine phosphorylated by SRC in response to PTK2B/PYK2 activation. Ubiquitinated. 'Lys-48'-linked ubiquitination at Lys-180 and Lys-251 by the ECS(RAB40A) complex leading to its degradation.

The protein localises to the cell membrane. The protein resides in the golgi apparatus membrane. Its subcellular location is the cell junction. It is found in the focal adhesion. It localises to the cell projection. The protein localises to the podosome. Functionally, binds to and activates protein kinase PAK1. Plays a role in the regulation of cell morphology, cytoskeletal organization and focal adhesion assembly during cell migration. Also stimulates quiescent cells to reenter the cell cycle. Has no detectable GTPase activity but its high intrinsic guanine nucleotide exchange activity suggests it is constitutively GTP-bound. This Mus musculus (Mouse) protein is Rho-related GTP-binding protein RhoU.